The following is a 347-amino-acid chain: Tetraacyldisaccharide 4'-kinase (347 aa).

64-71 (YVGGTGKT) is a binding site for ATP.

The protein belongs to the LpxK family.

It carries out the reaction a lipid A disaccharide + ATP = a lipid IVA + ADP + H(+). It participates in glycolipid biosynthesis; lipid IV(A) biosynthesis; lipid IV(A) from (3R)-3-hydroxytetradecanoyl-[acyl-carrier-protein] and UDP-N-acetyl-alpha-D-glucosamine: step 6/6. In terms of biological role, transfers the gamma-phosphate of ATP to the 4'-position of a tetraacyldisaccharide 1-phosphate intermediate (termed DS-1-P) to form tetraacyldisaccharide 1,4'-bis-phosphate (lipid IVA). This Bordetella bronchiseptica (strain ATCC BAA-588 / NCTC 13252 / RB50) (Alcaligenes bronchisepticus) protein is Tetraacyldisaccharide 4'-kinase.